Here is a 408-residue protein sequence, read N- to C-terminus: Phosphopentomutase (408 aa).

Positions 10, 307, 312, 348, 349, and 360 each coordinate Mn(2+).

Belongs to the phosphopentomutase family. Requires Mn(2+) as cofactor.

The protein localises to the cytoplasm. It carries out the reaction 2-deoxy-alpha-D-ribose 1-phosphate = 2-deoxy-D-ribose 5-phosphate. The catalysed reaction is alpha-D-ribose 1-phosphate = D-ribose 5-phosphate. The protein operates within carbohydrate degradation; 2-deoxy-D-ribose 1-phosphate degradation; D-glyceraldehyde 3-phosphate and acetaldehyde from 2-deoxy-alpha-D-ribose 1-phosphate: step 1/2. In terms of biological role, isomerase that catalyzes the conversion of deoxy-ribose 1-phosphate (dRib-1-P) and ribose 1-phosphate (Rib-1-P) to deoxy-ribose 5-phosphate (dRib-5-P) and ribose 5-phosphate (Rib-5-P), respectively. This chain is Phosphopentomutase, found in Buchnera aphidicola subsp. Baizongia pistaciae (strain Bp).